We begin with the raw amino-acid sequence, 63 residues long: MDQDVAEEILNKEYEVVYEGKRFLLKPAKAWVLQPPGKPGVIVALFKLPNGKTVRKVIARLPP.

It belongs to the Cren7 family. In terms of assembly, monomer. Post-translationally, methylated at multiple sites, to varying extents.

It localises to the chromosome. Its subcellular location is the cytoplasm. A chromatin protein, binds double-stranded DNA without sequence specificity. Constrains negative DNA supercoils. This is Chromatin protein Cren7 from Pyrobaculum calidifontis (strain DSM 21063 / JCM 11548 / VA1).